The primary structure comprises 234 residues: 1-(5-phosphoribosyl)-5-[(5-phosphoribosylamino)methylideneamino] imidazole-4-carboxamide isomerase (234 aa).

The Proton acceptor role is filled by D9. The active-site Proton donor is the D131.

The protein belongs to the HisA/HisF family.

The protein resides in the cytoplasm. It carries out the reaction 1-(5-phospho-beta-D-ribosyl)-5-[(5-phospho-beta-D-ribosylamino)methylideneamino]imidazole-4-carboxamide = 5-[(5-phospho-1-deoxy-D-ribulos-1-ylimino)methylamino]-1-(5-phospho-beta-D-ribosyl)imidazole-4-carboxamide. The protein operates within amino-acid biosynthesis; L-histidine biosynthesis; L-histidine from 5-phospho-alpha-D-ribose 1-diphosphate: step 4/9. This Staphylococcus epidermidis (strain ATCC 12228 / FDA PCI 1200) protein is 1-(5-phosphoribosyl)-5-[(5-phosphoribosylamino)methylideneamino] imidazole-4-carboxamide isomerase.